A 194-amino-acid polypeptide reads, in one-letter code: Clathrin light chain (194 aa).

Residues 44–156 (TTFDNSNNNN…TDSTSGNTTH (113 aa)) are disordered. A compositionally biased stretch (low complexity) spans 48–65 (NSNNNNNNNNHNNNSYNS). Composition is skewed to basic and acidic residues over residues 89-115 (EYLE…KIAE) and 124-146 (YSER…KSLE). Positions 124–194 (YSEREAKKKT…LIRLKNQPIV (71 aa)) are required for binding clathrin heavy chain, localization to punctae, and for cytokinesis and fruiting body development. The segment covering 147–156 (TDSTSGNTTH) has biased composition (polar residues).

The protein belongs to the clathrin light chain family. Clathrin coats are formed from molecules containing 3 heavy chains and 3 light chains.

Its subcellular location is the cytoplasmic vesicle membrane. It is found in the membrane. It localises to the coated pit. Its function is as follows. Clathrin is the major protein of the polyhedral coat of coated pits and vesicles. This chain is Clathrin light chain (clc), found in Dictyostelium discoideum (Social amoeba).